We begin with the raw amino-acid sequence, 1285 residues long: Protein cramped-like (1285 aa).

The tract at residues 1-161 (MTVKLGDAGS…EGKKVRRQWE (161 aa)) is disordered. The span at 13-24 (EGLKKLGKRTAD) shows a compositional bias: basic and acidic residues. Positions 57-71 (PAPPRGLPTPSPPQG) are enriched in pro residues. The segment covering 100–116 (GSGGASGSGPRGKGSDG) has biased composition (gly residues). Composition is skewed to low complexity over residues 117 to 126 (GASSSGNVSG) and 134 to 147 (GGSR…GSSG). Over residues 148-161 (PEKEEGKKVRRQWE) the composition is skewed to basic and acidic residues. Residues 158-221 (RQWESWSTED…FYYRTWHKIT (64 aa)) enclose the SANT domain. Ser-304 bears the Phosphoserine mark. Disordered regions lie at residues 456-519 (GQLK…GPHL), 579-673 (RADT…VPAS), 766-843 (NTAS…SDSD), 994-1055 (SSGI…SPAL), 1068-1107 (GLSI…LSQG), and 1132-1172 (PLSP…YPSD). A compositionally biased stretch (low complexity) spans 479–503 (ASQSSGESSPESAPAEGAAPSLSSP). 2 stretches are compositionally biased toward basic and acidic residues: residues 505–519 (APDR…GPHL) and 579–589 (RADTRSGREHP). Polar residues-rich tracts occupy residues 654-664 (EHLSSQGQPAT) and 766-784 (NTAS…STTP). The segment covering 792–803 (NSRSPRCSRNPS) has biased composition (low complexity). Residues 804 to 813 (TLRSNKTFPS) are compositionally biased toward polar residues. The span at 833-843 (GPSSTGSSDSD) shows a compositional bias: low complexity. Polar residues predominate over residues 994–1012 (SSGISPLSSEQATTAISGQ). Low complexity-rich tracts occupy residues 1069–1086 (LSIP…LSPP) and 1141–1156 (SDSS…SPQP). A Phosphoserine modification is found at Ser-1284.

Belongs to the cramped family.

It is found in the nucleus. This Mus musculus (Mouse) protein is Protein cramped-like.